The following is a 768-amino-acid chain: 5-methyltetrahydropteroyltriglutamate--homocysteine methyltransferase (768 aa).

5-methyltetrahydropteroyltri-L-glutamate contacts are provided by residues 17-20 and Lys-113; that span reads REWK. L-homocysteine is bound by residues 440–442 and Glu-493; that span reads IGS. L-methionine contacts are provided by residues 440-442 and Glu-493; that span reads IGS. A 5-methyltetrahydropteroyltri-L-glutamate-binding site is contributed by Trp-570. Asp-608 lines the L-homocysteine pocket. Asp-608 lines the L-methionine pocket. Residue Glu-614 coordinates 5-methyltetrahydropteroyltri-L-glutamate. Zn(2+) contacts are provided by His-650, Cys-652, and Glu-674. The Proton donor role is filled by His-703. A Zn(2+)-binding site is contributed by Cys-735.

Belongs to the vitamin-B12 independent methionine synthase family. Requires Zn(2+) as cofactor.

The catalysed reaction is 5-methyltetrahydropteroyltri-L-glutamate + L-homocysteine = tetrahydropteroyltri-L-glutamate + L-methionine. It participates in amino-acid biosynthesis; L-methionine biosynthesis via de novo pathway; L-methionine from L-homocysteine (MetE route): step 1/1. Functionally, catalyzes the transfer of a methyl group from 5-methyltetrahydrofolate to homocysteine resulting in methionine formation. The polypeptide is 5-methyltetrahydropteroyltriglutamate--homocysteine methyltransferase (Lactiplantibacillus plantarum (strain ATCC BAA-793 / NCIMB 8826 / WCFS1) (Lactobacillus plantarum)).